Here is a 264-residue protein sequence, read N- to C-terminus: 4-hydroxy-tetrahydrodipicolinate reductase (264 aa).

Residue Gly10–Gln15 coordinates NAD(+). Residue Arg37 participates in NADP(+) binding. NAD(+) contacts are provided by residues Gly99–Thr101 and Ser121–Leu124. Residue His153 is the Proton donor/acceptor of the active site. His154 provides a ligand contact to (S)-2,3,4,5-tetrahydrodipicolinate. Residue Lys157 is the Proton donor of the active site. Gly163 to Thr164 serves as a coordination point for (S)-2,3,4,5-tetrahydrodipicolinate.

It belongs to the DapB family.

It localises to the cytoplasm. The enzyme catalyses (S)-2,3,4,5-tetrahydrodipicolinate + NAD(+) + H2O = (2S,4S)-4-hydroxy-2,3,4,5-tetrahydrodipicolinate + NADH + H(+). It catalyses the reaction (S)-2,3,4,5-tetrahydrodipicolinate + NADP(+) + H2O = (2S,4S)-4-hydroxy-2,3,4,5-tetrahydrodipicolinate + NADPH + H(+). It functions in the pathway amino-acid biosynthesis; L-lysine biosynthesis via DAP pathway; (S)-tetrahydrodipicolinate from L-aspartate: step 4/4. In terms of biological role, catalyzes the conversion of 4-hydroxy-tetrahydrodipicolinate (HTPA) to tetrahydrodipicolinate. In Ehrlichia ruminantium (strain Gardel), this protein is 4-hydroxy-tetrahydrodipicolinate reductase.